The chain runs to 234 residues: Large ribosomal subunit protein uL1 (234 aa).

This sequence belongs to the universal ribosomal protein uL1 family. In terms of assembly, part of the 50S ribosomal subunit.

In terms of biological role, binds directly to 23S rRNA. The L1 stalk is quite mobile in the ribosome, and is involved in E site tRNA release. Protein L1 is also a translational repressor protein, it controls the translation of the L11 operon by binding to its mRNA. The sequence is that of Large ribosomal subunit protein uL1 from Syntrophobacter fumaroxidans (strain DSM 10017 / MPOB).